The following is a 446-amino-acid chain: Protein odr-4 homolog (446 aa).

Helical transmembrane passes span 81 to 101 and 424 to 444; these read MLPG…ELSK and MGVV…FNYF.

It belongs to the ODR-4 family.

Its subcellular location is the membrane. In terms of biological role, may play a role in the trafficking of a subset of G-protein coupled receptors. In Gallus gallus (Chicken), this protein is Protein odr-4 homolog (ODR4).